Here is a 741-residue protein sequence, read N- to C-terminus: Alpha-1,6-mannosylglycoprotein 6-beta-N-acetylglucosaminyltransferase A (741 aa).

At 1–13 (MALFTPWKLSSQK) the chain is on the cytoplasmic side. Residues 14–30 (LGFFLVTFGFIWGMMLL) form a helical; Signal-anchor for type II membrane protein membrane-spanning segment. At 31 to 741 (HFTIQQRTQP…GQVALCKDCL (711 aa)) the chain is on the lumenal side. N-linked (GlcNAc...) asparagine glycosylation is found at asparagine 110, asparagine 115, and asparagine 118. Disulfide bonds link cysteine 145/cysteine 183, cysteine 156/cysteine 196, cysteine 172/cysteine 338, cysteine 372/cysteine 626, cysteine 649/cysteine 724, cysteine 653/cysteine 726, cysteine 660/cysteine 713, cysteine 681/cysteine 702, and cysteine 737/cysteine 740. Positions 213-741 (NSLAEIRTDF…GQVALCKDCL (529 aa)) are sufficient for catalytic activity. Residues 264 to 269 (KRKRKK) are important for activity in FGF2 release. Asparagine 334 carries an N-linked (GlcNAc...) asparagine glycan. Position 378–379 (378–379 (DS)) interacts with substrate. Residues asparagine 433 and asparagine 447 are each glycosylated (N-linked (GlcNAc...) asparagine). Glutamate 526 contacts UDP-N-acetyl-alpha-D-glucosamine. Residue lysine 554 coordinates substrate.

It belongs to the glycosyltransferase 18 family. N-glycosylated. In terms of processing, a secreted form is released from the membrane after cleavage by gamma-secretase.

It is found in the golgi apparatus membrane. Its subcellular location is the secreted. It carries out the reaction N(4)-{beta-D-GlcNAc-(1-&gt;2)-[beta-D-GlcNAc-(1-&gt;4)]-alpha-D-Man-(1-&gt;3)-[beta-D-GlcNAc-(1-&gt;2)-alpha-D-Man-(1-&gt;6)]-beta-D-Man-(1-&gt;4)-beta-D-GlcNAc-(1-&gt;4)-beta-D-GlcNAc}-L-asparaginyl-[protein] + UDP-N-acetyl-alpha-D-glucosamine = N(4)-{beta-D-GlcNAc-(1-&gt;2)-[beta-D-GlcNAc-(1-&gt;4)]-alpha-D-Man-(1-&gt;3)-[beta-D-GlcNAc-(1-&gt;2)-[beta-D-GlcNAc-(1-&gt;6)]-alpha-D-Man-(1-&gt;6)]-beta-D-Man-(1-&gt;4)-beta-D-GlcNAc-(1-&gt;4)-beta-D-GlcNAc}-L-asparaginyl-[protein] + UDP + H(+). It participates in protein modification; protein glycosylation. With respect to regulation, activity is increased by Mn(2+) and Mg(2+). Catalyzes the addition of N-acetylglucosamine (GlcNAc) in beta 1-6 linkage to the alpha-linked mannose of biantennary N-linked oligosaccharides. Catalyzes an important step in the biosynthesis of branched, complex-type N-glycans, such as those found on EGFR, TGFR (TGF-beta receptor) and CDH2. Via its role in the biosynthesis of complex N-glycans, plays an important role in the activation of cellular signaling pathways, reorganization of the actin cytoskeleton, cell-cell adhesion and cell migration. MGAT5-dependent EGFR N-glycosylation enhances the interaction between EGFR and LGALS3 and thereby prevents rapid EGFR endocytosis and prolongs EGFR signaling. Required for efficient interaction between TGFB1 and its receptor. Enhances activation of intracellular signaling pathways by several types of growth factors, including FGF2, PDGF, IGF, TGFB1 and EGF. MGAT5-dependent CDH2 N-glycosylation inhibits CDH2-mediated homotypic cell-cell adhesion and contributes to the regulation of downstream signaling pathways. Promotes cell migration. Contributes to the regulation of the inflammatory response. MGAT5-dependent TCR N-glycosylation enhances the interaction between TCR and LGALS3, limits agonist-induced TCR clustering, and thereby dampens TCR-mediated responses to antigens. Required for normal leukocyte evasation and accumulation at sites of inflammation. Inhibits attachment of monocytes to the vascular endothelium and subsequent monocyte diapedesis. Its function is as follows. Promotes proliferation of umbilical vein endothelial cells and angiogenesis, at least in part by promoting the release of the growth factor FGF2 from the extracellular matrix. The sequence is that of Alpha-1,6-mannosylglycoprotein 6-beta-N-acetylglucosaminyltransferase A (MGAT5) from Homo sapiens (Human).